Reading from the N-terminus, the 205-residue chain is Dephospho-CoA kinase (205 aa).

The 200-residue stretch at 4 to 203 (KIGITGGIGS…QKIHYLCSAK (200 aa)) folds into the DPCK domain. 12-17 (GSGKSV) is an ATP binding site.

Belongs to the CoaE family.

It is found in the cytoplasm. The enzyme catalyses 3'-dephospho-CoA + ATP = ADP + CoA + H(+). It functions in the pathway cofactor biosynthesis; coenzyme A biosynthesis; CoA from (R)-pantothenate: step 5/5. Its function is as follows. Catalyzes the phosphorylation of the 3'-hydroxyl group of dephosphocoenzyme A to form coenzyme A. The sequence is that of Dephospho-CoA kinase from Bacteroides fragilis (strain YCH46).